Consider the following 143-residue polypeptide: MFMGEYLHTIDGKGRLIVPARFREALGERFIATKGLDHCLFVYPLDEWKVLEEKLRALPFTQPEARAFVRFFFSGATECELDKQGRILLPANLREYAQLDKDAVLVGVSSRVEIWSQALWANYSRQAEDAYASAAESLVNLGI.

SpoVT-AbrB domains lie at 5-47 (EYLH…PLDE) and 76-119 (ATEC…SQAL).

This sequence belongs to the MraZ family. In terms of assembly, forms oligomers.

The protein resides in the cytoplasm. The protein localises to the nucleoid. The chain is Transcriptional regulator MraZ from Desulfitobacterium hafniense (strain DSM 10664 / DCB-2).